Consider the following 468-residue polypeptide: MVLDSGTQVYEQAPPSPPASSPSQHHKLKPSNRNGPPLYPWPQSLAMPLALAVPSALQHQTMWQTFSKLHLEQRSHMKRSESTYSVNSTGRRGRGKAPLGRGCDPGGGTLRPAASLPHIAKIRKDVVSGSNKSPCMLVALRPTNMDQEREKFFQSHYAYNPQFEYQEPMPMSVLEKYQEASGQFMHQAVGIIKAVLEKFGTYENFEAATGGQLLTKCQIWSIVRRYMQKEGCVGEVVVQLSEDLLSQAVMMVENSRPTLAINLTGARQYWLEGMLRHEIGTHYLRGVNNSRQPWHSTEGRQQYGLRPANPTEEGLASLHSVLFRKQPFLWRAALLYYTIHQAAHMSFRQLFQDLEQYVQDEDVRWEYCVRAKRGQTDTSLPGCFSKDQVYLDGILRILRHRQTIDFQLLTSLGKVSYEDVEQLRPHGVLDKTRVPHFMKDLDRYRQQLEHIMTTNRLDEAELGRLLPD.

Over residues 1–10 (MVLDSGTQVY) the composition is skewed to polar residues. 2 disordered regions span residues 1–39 (MVLDSGTQVYEQAPPSPPASSPSQHHKLKPSNRNGPPLY) and 77–112 (MKRSESTYSVNSTGRRGRGKAPLGRGCDPGGGTLRP). Histidine 277 contacts Zn(2+). Residue glutamate 278 is the Nucleophile of the active site. Histidine 282 and glutamate 313 together coordinate Zn(2+).

Belongs to the peptidase MATCAP family. Zn(2+) serves as cofactor.

It is found in the cytoplasm. Its subcellular location is the cytoskeleton. The catalysed reaction is C-terminal L-alpha-aminoacyl-L-glutamyl-L-glutamyl-L-tyrosyl-[tubulin] + H2O = C-terminal L-alpha-aminoacyl-L-glutamyl-L-glutamyl-[tubulin] + L-tyrosine. It catalyses the reaction C-terminal L-alpha-aminoacyl-L-glutamyl-L-glutamyl-L-phenylalanyl-[tubulin] + H2O = C-terminal L-alpha-aminoacyl-L-glutamyl-L-glutamyl-[tubulin] + L-phenylalanine. Functionally, tyrosine carboxypeptidase that removes the C-terminal tyrosine residue of alpha-tubulin, thereby regulating microtubule dynamics and function. Also able to remove the C-terminal phenylalanine residue of alpha-tubulin TUBA8. Recognizes adjacent tubulin dimers along the same protofilament. The polypeptide is Microtubule-associated tyrosine carboxypeptidase 1 (Rattus norvegicus (Rat)).